The chain runs to 215 residues: Venom allergen 5.02 (215 aa).

The signal sequence occupies residues 1–10 (PIINLSFGEA). 4 cysteine pairs are disulfide-bonded: Cys-14/Cys-26, Cys-18/Cys-111, Cys-36/Cys-104, and Cys-181/Cys-198. Residues 55 to 200 (VNRHNQFRQK…WHTHYLVCNY (146 aa)) form the SCP domain.

This sequence belongs to the CRISP family. Venom allergen 5-like subfamily. Expressed by the venom gland.

It localises to the secreted. The sequence is that of Venom allergen 5.02 from Dolichovespula maculata (Bald-faced hornet).